Here is a 181-residue protein sequence, read N- to C-terminus: CAPA peptides (181 aa).

A signal peptide spans 1 to 22 (MQDNRFFILMILLVFSTSLNQG). The propeptide occupies 23–29 (QKLKAND). Ile41 carries the isoleucine amide modification. A propeptide spanning residues 44-54 (NSEISSFSRSE) is cleaved from the precursor. Ile65 bears the Isoleucine amide mark. Positions 68–181 (SDVSSFDNLN…ENERDTANFL (114 aa)) are excised as a propeptide. Positions 159–181 (TQGQGGYTPRLGRENERDTANFL) are disordered. Residues 169-181 (LGRENERDTANFL) show a composition bias toward basic and acidic residues.

In terms of processing, a pyrokinin potentially constituted by residues Asn-158 to Gly-170 has so far not been detected and might be completely absent in ants. In terms of tissue distribution, periviscerokinin 1 and 2 are expressed in central brain, antennal lobes and gnathal, thoracic and abominal ganglia. Periviscerokinin 2 is also expressed in the retrocerebral complex (at protein level).

The protein resides in the secreted. In terms of biological role, periviscerokinins mediate visceral muscle contractile activity (myotropic activity). The sequence is that of CAPA peptides from Camponotus floridanus (Florida carpenter ant).